The primary structure comprises 383 residues: Glutamyl-tRNA reductase (383 aa).

Residues 38-41 (TCNR), serine 82, 87-89 (EDQ), and glutamine 93 each bind substrate. The Nucleophile role is filled by cysteine 39. An NADP(+)-binding site is contributed by 161-166 (GAGEIA).

Belongs to the glutamyl-tRNA reductase family. In terms of assembly, homodimer.

It carries out the reaction (S)-4-amino-5-oxopentanoate + tRNA(Glu) + NADP(+) = L-glutamyl-tRNA(Glu) + NADPH + H(+). It participates in porphyrin-containing compound metabolism; protoporphyrin-IX biosynthesis; 5-aminolevulinate from L-glutamyl-tRNA(Glu): step 1/2. Catalyzes the NADPH-dependent reduction of glutamyl-tRNA(Glu) to glutamate 1-semialdehyde (GSA). The polypeptide is Glutamyl-tRNA reductase (Methanococcus aeolicus (strain ATCC BAA-1280 / DSM 17508 / OCM 812 / Nankai-3)).